A 179-amino-acid chain; its full sequence is Large ribosomal subunit protein uL6 (179 aa).

The protein belongs to the universal ribosomal protein uL6 family. Part of the 50S ribosomal subunit.

This protein binds to the 23S rRNA, and is important in its secondary structure. It is located near the subunit interface in the base of the L7/L12 stalk, and near the tRNA binding site of the peptidyltransferase center. The sequence is that of Large ribosomal subunit protein uL6 from Mycobacterium avium (strain 104).